A 507-amino-acid polypeptide reads, in one-letter code: Inositol-3-phosphate synthase (507 aa).

Gly70, Gly71, Asn72, Asn73, Asp143, Ile180, Gln190, Arg193, Thr230, Ala231, Asn232, Thr233, Gly281, Ser282, Asp306, Ser309, Asn340, Asn341, Asp342, Lys355, Ala391, Asp419, and Ser420 together coordinate NAD(+).

This sequence belongs to the myo-inositol 1-phosphate synthase family. It depends on NAD(+) as a cofactor.

The protein localises to the cytoplasm. The protein resides in the cytosol. It is found in the nucleus. It catalyses the reaction D-glucose 6-phosphate = 1D-myo-inositol 3-phosphate. It functions in the pathway polyol metabolism; myo-inositol biosynthesis; myo-inositol from D-glucose 6-phosphate: step 1/2. In terms of biological role, key enzyme in myo-inositol biosynthesis pathway that catalyzes the conversion of glucose 6-phosphate to 1-myo-inositol 1-phosphate in a NAD-dependent manner. The sequence is that of Inositol-3-phosphate synthase from Citrus paradisi (Grapefruit).